The chain runs to 498 residues: Elastase (498 aa).

The signal sequence occupies residues 1–23; the sequence is MKKVSTLDLLFVAIMGVSPAAFA. Positions 24-197 are excised as a propeptide; that stretch reads ADLIDVSKLP…VLDQWEGLAH (174 aa). Cysteines 227 and 255 form a disulfide. Thr-236 is modified (phosphothreonine). Position 333 (Asp-333) interacts with Ca(2+). Residue His-337 coordinates Zn(2+). Glu-338 is a catalytic residue. Residues His-341 and Glu-361 each coordinate Zn(2+). 4 residues coordinate Ca(2+): Glu-369, Glu-372, Asp-380, and Leu-382. His-420 functions as the Proton donor in the catalytic mechanism. The cysteines at positions 467 and 494 are disulfide-linked.

It belongs to the peptidase M4 family. The cofactor is Ca(2+). Zn(2+) serves as cofactor. Made as a pre-pro-protein which is exported to the periplasm. Probably autocatalyzes cleavage of its pro-peptide. The pro-peptide can be secreted with mature elastase.

Its subcellular location is the secreted. It carries out the reaction Hydrolysis of proteins including elastin, collagen types III and IV, fibronectin and immunoglobulin A, generally with bulky hydrophobic group at P1'. Insulin B chain cleavage pattern identical to that of thermolysin, but specificity differs in other respects.. Functionally, cleaves host elastase, collagen, IgI and several complement components as well as endogenous pro-aminopeptidase, pro-chitin-binding protein (cbpD). Cleaves its own pro-peptide. Involved in the pathogenesis of P.aeruginosa infections. This Pseudomonas aeruginosa (strain UCBPP-PA14) protein is Elastase (lasB).